A 389-amino-acid polypeptide reads, in one-letter code: 11-beta-hydroxysteroid dehydrogenase-like 5 (389 aa).

The helical; Signal-anchor for type II membrane protein transmembrane segment at 11-31 (LVAPPATMVVMAFAWPLLSFI) threads the bilayer. NADP(+) is bound by residues 56 to 82 (GASSAIGEQIAYEYAKRGANLVLVARR) and D107. A substrate-binding site is contributed by S186. The Proton acceptor role is filled by Y199. NADP(+) is bound by residues 199–203 (YSAAK) and K203. Residues 337-381 (LMLEGGPPRVPASPPRYTASPPHYTASPPRYPASPPRYPASPPRF) form a disordered region. A compositionally biased stretch (pro residues) spans 365–378 (PRYPASPPRYPASP).

Belongs to the short-chain dehydrogenases/reductases (SDR) family.

It localises to the membrane. This chain is 11-beta-hydroxysteroid dehydrogenase-like 5 (HSD5), found in Arabidopsis thaliana (Mouse-ear cress).